A 267-amino-acid polypeptide reads, in one-letter code: Cell division protein FtsQ (267 aa).

The Cytoplasmic portion of the chain corresponds to 1 to 32 (MRKKTSSNKKKQTKKTNNISLRRKLGLMYKKA). A helical transmembrane segment spans residues 33–53 (ILGLKIALIIFVCLFVFTKYF). Residues 54 to 267 (AGIKTYLTTN…DKNKYYIEKY (214 aa)) lie on the Periplasmic side of the membrane. Residues 73–141 (FKLENVIIEG…NTVYIKLFER (69 aa)) enclose the POTRA domain.

The protein belongs to the FtsQ/DivIB family. FtsQ subfamily.

It localises to the cell inner membrane. Functionally, essential cell division protein. The polypeptide is Cell division protein FtsQ (Rickettsia conorii (strain ATCC VR-613 / Malish 7)).